Consider the following 477-residue polypeptide: UDP-N-acetylmuramate--L-alanine ligase (477 aa).

117–123 (GTHGKTT) is a binding site for ATP.

It belongs to the MurCDEF family.

It is found in the cytoplasm. It catalyses the reaction UDP-N-acetyl-alpha-D-muramate + L-alanine + ATP = UDP-N-acetyl-alpha-D-muramoyl-L-alanine + ADP + phosphate + H(+). Its pathway is cell wall biogenesis; peptidoglycan biosynthesis. Cell wall formation. This Phenylobacterium zucineum (strain HLK1) protein is UDP-N-acetylmuramate--L-alanine ligase.